A 113-amino-acid chain; its full sequence is Hydrogenase maturation factor HypA (113 aa).

His2 serves as a coordination point for Ni(2+). Cys73, Cys76, Cys89, and Cys92 together coordinate Zn(2+).

Belongs to the HypA/HybF family.

Its function is as follows. Involved in the maturation of [NiFe] hydrogenases. Required for nickel insertion into the metal center of the hydrogenase. This is Hydrogenase maturation factor HypA from Xanthobacter autotrophicus (strain ATCC BAA-1158 / Py2).